The primary structure comprises 92 residues: RNA-binding protein Hfq (92 aa).

The Sm domain maps to 10-71 (DLFLNQLRKE…ISSIMPSKPI (62 aa)). A disordered region spans residues 73–92 (YMAQAQNNQQASQQSNNNQG). Residues 75–92 (AQAQNNQQASQQSNNNQG) show a composition bias toward low complexity.

The protein belongs to the Hfq family. As to quaternary structure, homohexamer.

Its function is as follows. RNA chaperone that binds small regulatory RNA (sRNAs) and mRNAs to facilitate mRNA translational regulation in response to envelope stress, environmental stress and changes in metabolite concentrations. Also binds with high specificity to tRNAs. The chain is RNA-binding protein Hfq from Caldicellulosiruptor bescii (strain ATCC BAA-1888 / DSM 6725 / KCTC 15123 / Z-1320) (Anaerocellum thermophilum).